We begin with the raw amino-acid sequence, 681 residues long: Sodium-dependent phosphate transporter 1 (681 aa).

6 consecutive transmembrane segments (helical) span residues 25 to 45 (NLWM…SVGA), 66 to 86 (ACIL…AKVS), 106 to 126 (LMAG…VASF), 162 to 182 (IVMS…ILFF), 201 to 221 (ALPI…MYTG), and 234 to 254 (GTIL…WFFV). Positions 266-295 (VKSSPSESPLMEKKNNLKDHEETKMAPGDV) are disordered. Residues S269 and S273 each carry the phosphoserine modification. Residues 275-289 (LMEKKNNLKDHEETK) show a composition bias toward basic and acidic residues. 4 helical membrane-spanning segments follow: residues 513 to 533 (VSLL…FAHG), 561 to 581 (ATPI…LWVW), 602 to 622 (FSIE…GLPI), and 652 to 672 (IFMA…AIMA).

The protein belongs to the inorganic phosphate transporter (PiT) (TC 2.A.20) family. Ubiquitously expressed.

The protein resides in the cell membrane. The catalysed reaction is 2 Na(+)(out) + phosphate(out) = 2 Na(+)(in) + phosphate(in). Its function is as follows. Sodium-phosphate symporter which preferentially transports the monovalent form of phosphate with a stoichiometry of two sodium ions per phosphate ion. May play a role in extracellular matrix and cartilage calcification as well as in vascular calcification. Essential for cell proliferation but this function is independent of its phosphate transporter activity. This chain is Sodium-dependent phosphate transporter 1 (Slc20a1), found in Rattus norvegicus (Rat).